Here is a 425-residue protein sequence, read N- to C-terminus: Serine--tRNA ligase (425 aa).

232 to 234 contacts L-serine; it reads TSE. Residues 263–265 and Val279 contribute to the ATP site; that span reads RRE. L-serine is bound at residue Glu286. Residue 350-353 coordinates ATP; it reads EVVS. Thr387 lines the L-serine pocket.

Belongs to the class-II aminoacyl-tRNA synthetase family. Type-1 seryl-tRNA synthetase subfamily. Homodimer. The tRNA molecule binds across the dimer.

Its subcellular location is the cytoplasm. It catalyses the reaction tRNA(Ser) + L-serine + ATP = L-seryl-tRNA(Ser) + AMP + diphosphate + H(+). The enzyme catalyses tRNA(Sec) + L-serine + ATP = L-seryl-tRNA(Sec) + AMP + diphosphate + H(+). It functions in the pathway aminoacyl-tRNA biosynthesis; selenocysteinyl-tRNA(Sec) biosynthesis; L-seryl-tRNA(Sec) from L-serine and tRNA(Sec): step 1/1. In terms of biological role, catalyzes the attachment of serine to tRNA(Ser). Is also able to aminoacylate tRNA(Sec) with serine, to form the misacylated tRNA L-seryl-tRNA(Sec), which will be further converted into selenocysteinyl-tRNA(Sec). This is Serine--tRNA ligase from Methanocella arvoryzae (strain DSM 22066 / NBRC 105507 / MRE50).